Here is a 77-residue protein sequence, read N- to C-terminus: Coiled-coil-helix-coiled-coil-helix domain-containing protein C550.01c (77 aa).

A CHCH domain is found at lysine 24–leucine 65. 2 short sequence motifs (cx9C motif) span residues cysteine 27 to cysteine 37 and cysteine 47 to cysteine 57. 2 disulfides stabilise this stretch: cysteine 27–cysteine 57 and cysteine 37–cysteine 47.

The protein localises to the cytoplasm. The protein resides in the nucleus. The protein is Coiled-coil-helix-coiled-coil-helix domain-containing protein C550.01c of Schizosaccharomyces pombe (strain 972 / ATCC 24843) (Fission yeast).